Reading from the N-terminus, the 378-residue chain is tRNA-specific 2-thiouridylase MnmA (378 aa).

ATP contacts are provided by residues 6-13 (AMSGGVDS) and Leu-32. The active-site Nucleophile is Cys-101. The cysteines at positions 101 and 199 are disulfide-linked. Gly-125 provides a ligand contact to ATP. An interaction with tRNA region spans residues 148-150 (KDQ). Residue Cys-199 is the Cysteine persulfide intermediate of the active site.

It belongs to the MnmA/TRMU family.

The protein resides in the cytoplasm. The catalysed reaction is S-sulfanyl-L-cysteinyl-[protein] + uridine(34) in tRNA + AH2 + ATP = 2-thiouridine(34) in tRNA + L-cysteinyl-[protein] + A + AMP + diphosphate + H(+). Functionally, catalyzes the 2-thiolation of uridine at the wobble position (U34) of tRNA, leading to the formation of s(2)U34. In Micrococcus luteus (strain ATCC 4698 / DSM 20030 / JCM 1464 / CCM 169 / CCUG 5858 / IAM 1056 / NBRC 3333 / NCIMB 9278 / NCTC 2665 / VKM Ac-2230) (Micrococcus lysodeikticus), this protein is tRNA-specific 2-thiouridylase MnmA.